The primary structure comprises 51 residues: MSSHKTFRIKRFLAKKQKQNRPIPQWIRMKTGNKIRYNSKRRHWRRTKLGL.

Belongs to the eukaryotic ribosomal protein eL39 family. As to quaternary structure, component of the large ribosomal subunit. Interacts with IMPACT.

Its subcellular location is the cytoplasm. In terms of biological role, RNA-binding component of the large ribosomal subunit. The ribosome is a large ribonucleoprotein complex responsible for the synthesis of proteins in the cell. The polypeptide is Large ribosomal subunit protein eL39 (Rpl39) (Mus musculus (Mouse)).